Consider the following 427-residue polypeptide: Probable WRKY transcription factor 35 (427 aa).

Disordered regions lie at residues Met1–Val45 and Tyr266–Phe336. A compositionally biased stretch (pro residues) spans Ser23 to Thr40. The segment at residues Ser209 to Pro275 is a DNA-binding region (WRKY). Positions Ser284–Ser310 are enriched in low complexity. Polar residues predominate over residues Arg311–His333.

It belongs to the WRKY group II-e family.

It localises to the nucleus. Transcription factor. Interacts specifically with the W box (5'-(T)TGAC[CT]-3'), a frequently occurring elicitor-responsive cis-acting element. In Arabidopsis thaliana (Mouse-ear cress), this protein is Probable WRKY transcription factor 35 (WRKY35).